The chain runs to 87 residues: Phytosulfokines 2 (87 aa).

The first 22 residues, methionine 1–alanine 22, serve as a signal peptide directing secretion. A propeptide spanning residues arginine 23–aspartate 77 is cleaved from the precursor. Sulfotyrosine occurs at positions 78 and 80. Positions lysine 83–proline 87 are excised as a propeptide.

It belongs to the phytosulfokine family. In terms of processing, sulfation is important for activity and for the binding to a putative membrane receptor. PSK-beta is an enzymatic derivative of PSK-alpha. In terms of tissue distribution, expressed in stems, roots and leaves.

It localises to the secreted. Promotes plant cell differentiation, organogenesis and somatic embryogenesis as well as cell proliferation. In Arabidopsis thaliana (Mouse-ear cress), this protein is Phytosulfokines 2 (PSK2).